The following is a 137-amino-acid chain: NADH-quinone oxidoreductase subunit A 2 (137 aa).

The next 3 membrane-spanning stretches (helical) occupy residues 12–32 (WGFAAFLLGVVGLLAFMLGVS), 66–86 (FYLVAMLFVIFDVEALFLFAW), and 95–115 (WAGLIEATIFIAILLAGLVYL).

This sequence belongs to the complex I subunit 3 family. As to quaternary structure, NDH-1 is composed of 13 different subunits. Subunits NuoA, H, J, K, L, M, N constitute the membrane sector of the complex.

The protein localises to the cell inner membrane. The enzyme catalyses a quinone + NADH + 5 H(+)(in) = a quinol + NAD(+) + 4 H(+)(out). NDH-1 shuttles electrons from NADH, via FMN and iron-sulfur (Fe-S) centers, to quinones in the respiratory chain. The immediate electron acceptor for the enzyme in this species is believed to be ubiquinone. Couples the redox reaction to proton translocation (for every two electrons transferred, four hydrogen ions are translocated across the cytoplasmic membrane), and thus conserves the redox energy in a proton gradient. This is NADH-quinone oxidoreductase subunit A 2 from Pseudomonas aeruginosa (strain ATCC 15692 / DSM 22644 / CIP 104116 / JCM 14847 / LMG 12228 / 1C / PRS 101 / PAO1).